We begin with the raw amino-acid sequence, 415 residues long: Arginine biosynthesis bifunctional protein ArgJ (415 aa).

Positions 156, 182, 193, 279, 410, and 415 each coordinate substrate. T193 serves as the catalytic Nucleophile.

This sequence belongs to the ArgJ family. In terms of assembly, heterotetramer of two alpha and two beta chains.

The protein localises to the cytoplasm. It catalyses the reaction N(2)-acetyl-L-ornithine + L-glutamate = N-acetyl-L-glutamate + L-ornithine. The enzyme catalyses L-glutamate + acetyl-CoA = N-acetyl-L-glutamate + CoA + H(+). It participates in amino-acid biosynthesis; L-arginine biosynthesis; L-ornithine and N-acetyl-L-glutamate from L-glutamate and N(2)-acetyl-L-ornithine (cyclic): step 1/1. The protein operates within amino-acid biosynthesis; L-arginine biosynthesis; N(2)-acetyl-L-ornithine from L-glutamate: step 1/4. In terms of biological role, catalyzes two activities which are involved in the cyclic version of arginine biosynthesis: the synthesis of N-acetylglutamate from glutamate and acetyl-CoA as the acetyl donor, and of ornithine by transacetylation between N(2)-acetylornithine and glutamate. In Synechococcus sp. (strain ATCC 27144 / PCC 6301 / SAUG 1402/1) (Anacystis nidulans), this protein is Arginine biosynthesis bifunctional protein ArgJ.